We begin with the raw amino-acid sequence, 1242 residues long: DNA-directed RNA polymerase RPB2 homolog (1242 aa).

The C4-type zinc finger occupies 1180–1201; it reads CRNCGEPAIYNASHPIYKCMNC.

The protein belongs to the RNA polymerase beta chain family. In terms of assembly, part of the viral DNA-directed RNA polymerase that consists of 8 polII-like subunits (RPB1, RPB2, RPB3, RPB5, RPB6, RPB7, RPB9, RPB10), a capping enzyme and a termination factor.

It is found in the host cytoplasm. Its subcellular location is the virion. The enzyme catalyses RNA(n) + a ribonucleoside 5'-triphosphate = RNA(n+1) + diphosphate. Functionally, catalytic component of the DNA-directed RNA polymerase (RNAP) that catalyzes the transcription in the cytoplasm of viral DNA into RNA using the four ribonucleoside triphosphates as substrates. Forms the polymerase active center together with RPB1. Part of the core element with the central large cleft, the clamp element that moves to open and close the cleft and the jaws that are thought to grab the incoming DNA template. The polypeptide is DNA-directed RNA polymerase RPB2 homolog (African swine fever virus (isolate Tick/Malawi/Lil 20-1/1983) (ASFV)).